The chain runs to 176 residues: NAD(P)H-quinone oxidoreductase subunit 6, chloroplastic (176 aa).

The next 5 membrane-spanning stretches (helical) occupy residues 10–30, 32–52, 61–81, 92–112, and 152–172; these read FLLV…VLLA, PIYS…FYIL, AQLL…VMFI, LWTV…VSLI, and FFIP…GAIA.

This sequence belongs to the complex I subunit 6 family. In terms of assembly, NDH is composed of at least 16 different subunits, 5 of which are encoded in the nucleus.

The protein resides in the plastid. The protein localises to the chloroplast thylakoid membrane. The enzyme catalyses a plastoquinone + NADH + (n+1) H(+)(in) = a plastoquinol + NAD(+) + n H(+)(out). The catalysed reaction is a plastoquinone + NADPH + (n+1) H(+)(in) = a plastoquinol + NADP(+) + n H(+)(out). Its function is as follows. NDH shuttles electrons from NAD(P)H:plastoquinone, via FMN and iron-sulfur (Fe-S) centers, to quinones in the photosynthetic chain and possibly in a chloroplast respiratory chain. The immediate electron acceptor for the enzyme in this species is believed to be plastoquinone. Couples the redox reaction to proton translocation, and thus conserves the redox energy in a proton gradient. This is NAD(P)H-quinone oxidoreductase subunit 6, chloroplastic (ndhG) from Helianthus annuus (Common sunflower).